Consider the following 137-residue polypeptide: ATP synthase epsilon chain (137 aa).

Belongs to the ATPase epsilon chain family. As to quaternary structure, F-type ATPases have 2 components, CF(1) - the catalytic core - and CF(0) - the membrane proton channel. CF(1) has five subunits: alpha(3), beta(3), gamma(1), delta(1), epsilon(1). CF(0) has three main subunits: a, b and c.

The protein resides in the cell inner membrane. Functionally, produces ATP from ADP in the presence of a proton gradient across the membrane. This is ATP synthase epsilon chain from Ruegeria sp. (strain TM1040) (Silicibacter sp.).